A 96-amino-acid chain; its full sequence is Non-specific lipid-transfer protein 2 (96 aa).

Residues 1 to 27 (MMRKLAVLVLAVAMVAACGGGVVGVAG) form the signal peptide. Intrachain disulfides connect C30–C62, C38–C52, C53–C88, and C64–C95.

Transfer lipids across membranes. May play a role in plant defense or in the biosynthesis of cuticle layers. This chain is Non-specific lipid-transfer protein 2 (LTP-2), found in Oryza sativa subsp. japonica (Rice).